Here is a 337-residue protein sequence, read N- to C-terminus: Methionyl-tRNA formyltransferase (337 aa).

Position 116–119 (116–119 (SILP)) interacts with (6S)-5,6,7,8-tetrahydrofolate.

The protein belongs to the Fmt family.

The catalysed reaction is L-methionyl-tRNA(fMet) + (6R)-10-formyltetrahydrofolate = N-formyl-L-methionyl-tRNA(fMet) + (6S)-5,6,7,8-tetrahydrofolate + H(+). Attaches a formyl group to the free amino group of methionyl-tRNA(fMet). The formyl group appears to play a dual role in the initiator identity of N-formylmethionyl-tRNA by promoting its recognition by IF2 and preventing the misappropriation of this tRNA by the elongation apparatus. This is Methionyl-tRNA formyltransferase from Desulfovibrio desulfuricans (strain ATCC 27774 / DSM 6949 / MB).